The following is a 367-amino-acid chain: Alanine racemase (367 aa).

The active-site Proton acceptor; specific for D-alanine is the K40. Position 40 is an N6-(pyridoxal phosphate)lysine (K40). Position 136 (R136) interacts with substrate. Y263 acts as the Proton acceptor; specific for L-alanine in catalysis. M310 contributes to the substrate binding site.

Belongs to the alanine racemase family. Pyridoxal 5'-phosphate serves as cofactor.

It carries out the reaction L-alanine = D-alanine. Its pathway is amino-acid biosynthesis; D-alanine biosynthesis; D-alanine from L-alanine: step 1/1. In terms of biological role, catalyzes the interconversion of L-alanine and D-alanine. May also act on other amino acids. This chain is Alanine racemase (alr), found in Streptococcus pneumoniae serotype 19F (strain G54).